A 190-amino-acid chain; its full sequence is Elongation factor P-like protein (190 aa).

This sequence belongs to the elongation factor P family.

The polypeptide is Elongation factor P-like protein (Escherichia fergusonii (strain ATCC 35469 / DSM 13698 / CCUG 18766 / IAM 14443 / JCM 21226 / LMG 7866 / NBRC 102419 / NCTC 12128 / CDC 0568-73)).